The following is a 685-amino-acid chain: MPEQNRILCRELSLLAFNRRVLAQAEDQNVPLLERLCFLCIVSSNLDEFFEVRMAWLKRENKLHPRRRLDNGKMPSETIADVTEAARSLIRHQYDLFNNVLQPELAREGIHFYRRRNWTDTQKKWIEDYFDRELLPILTPIGLDPSHPFPRPLNKSLNFAVELDGTDAFGRPSGMAIVQAPRILPRVVPLPSELCGGGHGFVFLSSILHAHVGKLFPGMNVKGCHQFRLTRDSDLTVDEEDVQNLRAAIQNELHDREYGDGVRLEVADTCPAYIRDFLLAQFKLTAAELYQVKGPVNLVRLNAVPDLVDRPDLKFPPHTQGRLKALGKNGSIFKLIRRAPILLHHPYQSFNPVVEMMREAAADPAVLAVKMTIYRTGTRSELVRALMKAALAGKQVTVVVELMARFDEANNVNWAKQLEEAGAHVVYGVFGYKVHAKMALVIRREDGVLKRYAHLGTGNYHQGTSRIYTDFGLITADEQITADVNTLFMEITGLGKPGRLNKLYQSPFTLHKMVIDRIARETEHAKAGKPARITAKMNSLIEPTVIEALYRASAAGVQIDLIVRGMCTLRPGVKGLSENIRVRSIIGRQLEHARVYCFHNNGADDTFISSADWMGRNFFRRIETAAPITAPELKKRVIREGLEMALADNTHAWLMQPDGGYIRAAPAEGESEADLQNDLWTLLGG.

Residue Asn45 coordinates ATP. Mg(2+) is bound by residues Arg375 and Arg405. The Phosphohistidine intermediate role is filled by His435. Tyr468, Arg564, and His592 together coordinate ATP.

This sequence belongs to the polyphosphate kinase 1 (PPK1) family. Mg(2+) is required as a cofactor. Post-translationally, an intermediate of this reaction is the autophosphorylated ppk in which a phosphate is covalently linked to a histidine residue through a N-P bond.

The catalysed reaction is [phosphate](n) + ATP = [phosphate](n+1) + ADP. Its function is as follows. Catalyzes the reversible transfer of the terminal phosphate of ATP to form a long-chain polyphosphate (polyP). The protein is Polyphosphate kinase of Neisseria meningitidis serogroup C (strain 053442).